The chain runs to 600 residues: Arginine--tRNA ligase (600 aa).

Residues 123–133 carry the 'HIGH' region motif; sequence PNVAKPMHVGH.

This sequence belongs to the class-I aminoacyl-tRNA synthetase family. Monomer.

Its subcellular location is the cytoplasm. The catalysed reaction is tRNA(Arg) + L-arginine + ATP = L-arginyl-tRNA(Arg) + AMP + diphosphate. This chain is Arginine--tRNA ligase, found in Caulobacter vibrioides (strain NA1000 / CB15N) (Caulobacter crescentus).